We begin with the raw amino-acid sequence, 947 residues long: Protein translocase subunit SecA (947 aa).

Residues Gln85, 103–107 (GEGKT), and Asp514 each bind ATP. The interval 864–947 (AAPSLDKGAQ…QAKGGRRRKK (84 aa)) is disordered. The span at 884-900 (PEIRAKGLDAPQRRDLH) shows a compositional bias: basic and acidic residues. A compositionally biased stretch (basic residues) spans 934–947 (ERRKQAKGGRRRKK).

It belongs to the SecA family. Monomer and homodimer. Part of the essential Sec protein translocation apparatus which comprises SecA, SecYEG and auxiliary proteins SecDF. Other proteins may also be involved.

It is found in the cell membrane. The protein resides in the cytoplasm. It carries out the reaction ATP + H2O + cellular proteinSide 1 = ADP + phosphate + cellular proteinSide 2.. In terms of biological role, part of the Sec protein translocase complex. Interacts with the SecYEG preprotein conducting channel. Has a central role in coupling the hydrolysis of ATP to the transfer of proteins into and across the cell membrane, serving as an ATP-driven molecular motor driving the stepwise translocation of polypeptide chains across the membrane. This Streptomyces lividans protein is Protein translocase subunit SecA.